We begin with the raw amino-acid sequence, 502 residues long: ATP synthase subunit alpha (502 aa).

The tract at residues 114–139 (PIDGRGPIETSKTRPIESPAPGVMDR) is disordered. 169 to 176 (GDRQTGKT) serves as a coordination point for ATP.

The protein belongs to the ATPase alpha/beta chains family. In terms of assembly, F-type ATPases have 2 components, CF(1) - the catalytic core - and CF(0) - the membrane proton channel. CF(1) has five subunits: alpha(3), beta(3), gamma(1), delta(1), epsilon(1). CF(0) has three main subunits: a(1), b(2) and c(9-12). The alpha and beta chains form an alternating ring which encloses part of the gamma chain. CF(1) is attached to CF(0) by a central stalk formed by the gamma and epsilon chains, while a peripheral stalk is formed by the delta and b chains.

It is found in the cell membrane. The enzyme catalyses ATP + H2O + 4 H(+)(in) = ADP + phosphate + 5 H(+)(out). Its function is as follows. Produces ATP from ADP in the presence of a proton gradient across the membrane. The alpha chain is a regulatory subunit. The sequence is that of ATP synthase subunit alpha from Halalkalibacterium halodurans (strain ATCC BAA-125 / DSM 18197 / FERM 7344 / JCM 9153 / C-125) (Bacillus halodurans).